Here is a 134-residue protein sequence, read N- to C-terminus: MIYMLDTNIIIYLMKNRPKIIAERVSQLLPNDRLVMSFITYAELIKGAFGSQNYEQSIRAIELLTERVNVLYPNEQICLHYGKWANTLKKQGRPIGNNDLWIACHALSLNAVLITHNVKEFQRITDLQWQDWTK.

Residues 3–132 (YMLDTNIIIY…RITDLQWQDW (130 aa)) enclose the PINc domain. 2 residues coordinate Mg(2+): Asp-6 and Asp-99.

This sequence belongs to the PINc/VapC protein family. Forms a complex with VapB1. Mg(2+) is required as a cofactor.

In terms of biological role, toxic component of a type II toxin-antitoxin (TA) system. Upon expression in E.coli inhibits growth in liquid culture. Its toxic effect is neutralized by coexpression with antitoxin VapB1. Degrades RNA but not ss- or ds-DNA in vitro, degradation is inhibited by VapB1 antitoxin. The chain is Ribonuclease VapC1 from Haemophilus influenzae (strain R2866).